The sequence spans 153 residues: Large ribosomal subunit protein uL15 (153 aa).

Residues A15–A42 are disordered. The span at S23–T35 shows a compositional bias: gly residues.

Belongs to the universal ribosomal protein uL15 family. In terms of assembly, part of the 50S ribosomal subunit.

Its function is as follows. Binds to the 23S rRNA. The chain is Large ribosomal subunit protein uL15 from Treponema pallidum (strain Nichols).